A 66-amino-acid polypeptide reads, in one-letter code: Large ribosomal subunit protein bL35 (66 aa).

Belongs to the bacterial ribosomal protein bL35 family.

In Neorickettsia sennetsu (strain ATCC VR-367 / Miyayama) (Ehrlichia sennetsu), this protein is Large ribosomal subunit protein bL35.